We begin with the raw amino-acid sequence, 237 residues long: MTRLVPALRLELTLQVRQKFLHAAVFSGLIWLAVLLPMPVSLRPVAEPYVLVGDIAIIGFFFVGGTVFFEKQERTIGAIVSTPLRFWEYLAAKLTVLLAISLFVAVVVATIVHGLGYHLLPLVAGIVLGTLLMLLVGFSSSLPFASVTDWFLAAVIPLAIMLAPPVVHYSGLWPNPVLYLIPTQGPLLLLGAAFDQVSLAPWQVGYAVVYPIVCAAGLCRAAKALFGRYVVQRSGVL.

6 helical membrane passes run 20-40 (FLHA…PMPV), 49-69 (YVLV…TVFF), 96-116 (VLLA…HGLG), 119-139 (LLPL…VGFS), 147-167 (VTDW…PPVV), and 199-219 (LAPW…AGLC).

The complex is composed of 2 ATP-binding proteins and 2 transmembrane proteins.

It localises to the cell membrane. Functionally, part of the ABC transporter complex involved in fluoroquinolones export. Probably responsible for the translocation of the substrate across the membrane. The sequence is that of Fluoroquinolones export permease protein MT2761 from Mycobacterium tuberculosis (strain CDC 1551 / Oshkosh).